We begin with the raw amino-acid sequence, 104 residues long: Large ribosomal subunit protein uL24 (104 aa).

This sequence belongs to the universal ribosomal protein uL24 family. In terms of assembly, part of the 50S ribosomal subunit.

One of two assembly initiator proteins, it binds directly to the 5'-end of the 23S rRNA, where it nucleates assembly of the 50S subunit. Its function is as follows. One of the proteins that surrounds the polypeptide exit tunnel on the outside of the subunit. This is Large ribosomal subunit protein uL24 from Flavobacterium johnsoniae (strain ATCC 17061 / DSM 2064 / JCM 8514 / BCRC 14874 / CCUG 350202 / NBRC 14942 / NCIMB 11054 / UW101) (Cytophaga johnsonae).